A 37-amino-acid chain; its full sequence is Potassium channel toxin alpha-KTx 11.2 (37 aa).

Cystine bridges form between Cys-8-Cys-27, Cys-13-Cys-33, and Cys-17-Cys-35.

It belongs to the short scorpion toxin superfamily. Potassium channel inhibitor family. Alpha-KTx 11 subfamily. Expressed by the venom gland.

Its subcellular location is the secreted. Its function is as follows. Binds and inhibits voltage-sensitive potassium channels. Inhibits the vertebrate potassium channel Kv1.1/KCNA1 with low affinity. This is Potassium channel toxin alpha-KTx 11.2 from Parabuthus villosus (Black hairy thick-tailed scorpion).